We begin with the raw amino-acid sequence, 292 residues long: Histamine N-methyltransferase (292 aa).

Residue E28 coordinates substrate. Residues G60, E89, Q94, S120, and I142 each coordinate S-adenosyl-L-methionine. N283 contacts substrate.

The protein belongs to the class I-like SAM-binding methyltransferase superfamily. HNMT family. As to quaternary structure, monomer. Expressed in jejunum, brain &gt; lung, spleen, stomach &gt; liver, kidney.

It is found in the cytoplasm. The enzyme catalyses histamine + S-adenosyl-L-methionine = N(tau)-methylhistamine + S-adenosyl-L-homocysteine + H(+). Its function is as follows. Inactivates histamine by N-methylation. Plays an important role in degrading histamine and in regulating the airway response to histamine. In Cavia porcellus (Guinea pig), this protein is Histamine N-methyltransferase (HNMT).